Reading from the N-terminus, the 700-residue chain is Neoverrucotoxin subunit beta (700 aa).

A B30.2/SPRY domain is found at 506-700; sequence HMPGVETIKD…QKVNGQIKLL (195 aa).

The protein belongs to the SNTX/VTX toxin family. Heterodimer of alpha and beta subunits. Post-translationally, not glycosylated. In terms of processing, four intrachain disulfide linkages are present in the heterodimer. No interchain disulfide bound links the two subunits. In terms of tissue distribution, expressed by the venom gland.

Its subcellular location is the secreted. In terms of biological role, has hemolytic and lethal activities. Its hemolytic activity is inhibited by anionic lipids, especially potently by cardiolipin. The protein is Neoverrucotoxin subunit beta of Synanceia verrucosa (Reef stonefish).